The chain runs to 142 residues: COA8 family protein CBG23705, mitochondrial (142 aa).

The protein belongs to the COA8 family.

The protein localises to the mitochondrion inner membrane. May be required for cytochrome c complex (COX) assembly and function, COX being the terminal component of the mitochondrial respiratory chain. This chain is COA8 family protein CBG23705, mitochondrial, found in Caenorhabditis briggsae.